The sequence spans 423 residues: Serine hydroxymethyltransferase (423 aa).

Residue 119 to 121 (GHI) coordinates (6S)-5,6,7,8-tetrahydrofolate. Lys-225 carries the post-translational modification N6-(pyridoxal phosphate)lysine.

Belongs to the SHMT family. Homodimer. It depends on pyridoxal 5'-phosphate as a cofactor.

Its subcellular location is the cytoplasm. It catalyses the reaction (6R)-5,10-methylene-5,6,7,8-tetrahydrofolate + glycine + H2O = (6S)-5,6,7,8-tetrahydrofolate + L-serine. The protein operates within one-carbon metabolism; tetrahydrofolate interconversion. Its pathway is amino-acid biosynthesis; glycine biosynthesis; glycine from L-serine: step 1/1. Catalyzes the reversible interconversion of serine and glycine with tetrahydrofolate (THF) serving as the one-carbon carrier. Also exhibits THF-independent aldolase activity toward beta-hydroxyamino acids, producing glycine and aldehydes, via a retro-aldol mechanism. The polypeptide is Serine hydroxymethyltransferase (Methanocella arvoryzae (strain DSM 22066 / NBRC 105507 / MRE50)).